The sequence spans 209 residues: Urease accessory protein UreG (209 aa).

GTP is bound at residue 14–21 (GPVGSGKT).

It belongs to the SIMIBI class G3E GTPase family. UreG subfamily. In terms of assembly, homodimer. UreD, UreF and UreG form a complex that acts as a GTP-hydrolysis-dependent molecular chaperone, activating the urease apoprotein by helping to assemble the nickel containing metallocenter of UreC. The UreE protein probably delivers the nickel.

The protein localises to the cytoplasm. Its function is as follows. Facilitates the functional incorporation of the urease nickel metallocenter. This process requires GTP hydrolysis, probably effectuated by UreG. This is Urease accessory protein UreG from Rhodopseudomonas palustris (strain ATCC BAA-98 / CGA009).